A 164-amino-acid polypeptide reads, in one-letter code: HTH-type transcriptional regulator IscR (164 aa).

The 130-residue stretch at 2 to 131 folds into the HTH rrf2-type domain; it reads RLTSKGRYAV…NNITLGELVN (130 aa). Residues 28–51 constitute a DNA-binding region (H-T-H motif); that stretch reads LADISERQGISLSYLEQLFSRLRK. The [2Fe-2S] cluster site is built by C92, C98, and C104.

Requires [2Fe-2S] cluster as cofactor.

In terms of biological role, regulates the transcription of several operons and genes involved in the biogenesis of Fe-S clusters and Fe-S-containing proteins. The protein is HTH-type transcriptional regulator IscR of Salmonella agona (strain SL483).